A 666-amino-acid polypeptide reads, in one-letter code: DNA mismatch repair protein MutL (666 aa).

This sequence belongs to the DNA mismatch repair MutL/HexB family.

This protein is involved in the repair of mismatches in DNA. It is required for dam-dependent methyl-directed DNA mismatch repair. May act as a 'molecular matchmaker', a protein that promotes the formation of a stable complex between two or more DNA-binding proteins in an ATP-dependent manner without itself being part of a final effector complex. In Clostridium botulinum (strain Kyoto / Type A2), this protein is DNA mismatch repair protein MutL.